Consider the following 207-residue polypeptide: uncharacterized protein (207 aa).

This is an uncharacterized protein from Frog virus 3 (isolate Goorha) (FV-3).